A 428-amino-acid polypeptide reads, in one-letter code: Kynureninase (428 aa).

Pyridoxal 5'-phosphate-binding positions include Thr104, Thr105, 132–135, Asp213, His216, and Tyr238; that span reads FPSD. N6-(pyridoxal phosphate)lysine is present on Lys239. Pyridoxal 5'-phosphate contacts are provided by Trp267 and Thr295.

Belongs to the kynureninase family. Homodimer. Requires pyridoxal 5'-phosphate as cofactor.

The enzyme catalyses L-kynurenine + H2O = anthranilate + L-alanine + H(+). The catalysed reaction is 3-hydroxy-L-kynurenine + H2O = 3-hydroxyanthranilate + L-alanine + H(+). Its pathway is amino-acid degradation; L-kynurenine degradation; L-alanine and anthranilate from L-kynurenine: step 1/1. It functions in the pathway cofactor biosynthesis; NAD(+) biosynthesis; quinolinate from L-kynurenine: step 2/3. Functionally, catalyzes the cleavage of L-kynurenine (L-Kyn) and L-3-hydroxykynurenine (L-3OHKyn) into anthranilic acid (AA) and 3-hydroxyanthranilic acid (3-OHAA), respectively. This chain is Kynureninase, found in Bacillus cereus (strain ATCC 10987 / NRS 248).